We begin with the raw amino-acid sequence, 607 residues long: DNA mismatch repair protein MutL (607 aa).

The protein belongs to the DNA mismatch repair MutL/HexB family.

Functionally, this protein is involved in the repair of mismatches in DNA. It is required for dam-dependent methyl-directed DNA mismatch repair. May act as a 'molecular matchmaker', a protein that promotes the formation of a stable complex between two or more DNA-binding proteins in an ATP-dependent manner without itself being part of a final effector complex. The protein is DNA mismatch repair protein MutL of Gemmatimonas aurantiaca (strain DSM 14586 / JCM 11422 / NBRC 100505 / T-27).